The sequence spans 85 residues: UPF0386 protein Arad_1912 (85 aa).

It belongs to the UPF0386 family.

This is UPF0386 protein Arad_1912 from Rhizobium rhizogenes (strain K84 / ATCC BAA-868) (Agrobacterium radiobacter).